The primary structure comprises 446 residues: Tubulin alpha-2 chain (446 aa).

Positions 1–4 (MREC) match the MREC motif motif. GTP-binding residues include Gln-11, Glu-68, Ser-137, Gly-141, Thr-142, Ser-176, Asn-203, and Asn-225. Mg(2+) is bound at residue Glu-68. Glu-251 is an active-site residue.

Belongs to the tubulin family. Dimer of alpha and beta chains. A typical microtubule is a hollow water-filled tube with an outer diameter of 25 nm and an inner diameter of 15 nM. Alpha-beta heterodimers associate head-to-tail to form protofilaments running lengthwise along the microtubule wall with the beta-tubulin subunit facing the microtubule plus end conferring a structural polarity. Microtubules usually have 13 protofilaments but different protofilament numbers can be found in some organisms and specialized cells. Mg(2+) is required as a cofactor. Post-translationally, some glutamate residues at the C-terminus are polyglycylated, resulting in polyglycine chains on the gamma-carboxyl group. Glycylation is mainly limited to tubulin incorporated into axonemes (cilia and flagella) whereas glutamylation is prevalent in neuronal cells, centrioles, axonemes, and the mitotic spindle. Both modifications can coexist on the same protein on adjacent residues, and lowering polyglycylation levels increases polyglutamylation, and reciprocally. The precise function of polyglycylation is still unclear. In terms of processing, some glutamate residues at the C-terminus are polyglutamylated, resulting in polyglutamate chains on the gamma-carboxyl group. Polyglutamylation plays a key role in microtubule severing by spastin (SPAST). SPAST preferentially recognizes and acts on microtubules decorated with short polyglutamate tails: severing activity by SPAST increases as the number of glutamates per tubulin rises from one to eight, but decreases beyond this glutamylation threshold. In terms of tissue distribution, testis specific.

The protein resides in the cytoplasm. The protein localises to the cytoskeleton. The enzyme catalyses GTP + H2O = GDP + phosphate + H(+). Functionally, tubulin is the major constituent of microtubules, a cylinder consisting of laterally associated linear protofilaments composed of alpha- and beta-tubulin heterodimers. Microtubules grow by the addition of GTP-tubulin dimers to the microtubule end, where a stabilizing cap forms. Below the cap, tubulin dimers are in GDP-bound state, owing to GTPase activity of alpha-tubulin. This Gallus gallus (Chicken) protein is Tubulin alpha-2 chain.